A 200-amino-acid polypeptide reads, in one-letter code: MAGLKQHSGLVVPLDAANVDTDAIIPKQFLQAITRVGFGKHLFHEWRYLDAEETRLNPDFVLNFPQYQGATILLARKNLGCGSSREHAPWALADYGFKVMIAPSFADIFYNNSLNNHMLPIRLSEEEVEEIFQWVWANEGKQIHIDLEAMTVTVGDKIYRFELDEFRRHCLLNGLDNIGLTLQHEDAIIAYESKIPAFLR.

The protein belongs to the LeuD family. LeuD type 1 subfamily. Heterodimer of LeuC and LeuD.

It catalyses the reaction (2R,3S)-3-isopropylmalate = (2S)-2-isopropylmalate. The protein operates within amino-acid biosynthesis; L-leucine biosynthesis; L-leucine from 3-methyl-2-oxobutanoate: step 2/4. Functionally, catalyzes the isomerization between 2-isopropylmalate and 3-isopropylmalate, via the formation of 2-isopropylmaleate. The chain is 3-isopropylmalate dehydratase small subunit from Actinobacillus pleuropneumoniae serotype 7 (strain AP76).